The sequence spans 304 residues: MSEAKQIYHVPVLLNESVDGMNIQPGGIYVDATFGGGGHSKEILSRLDSTAHLYSFDQDEDAEKNIVSDSRFTFVRSNFRYLPNFLRYYGVEGVDAILADLGVSSHHFDDSERGFSFRFEGKLDMRMNKRAGMTAADVVNTYDEERLANIFYLYGELKNSRKLASAIVKARGVKQIVTIGDFLEVIKPLFGREREKKELAKVFQALRIEVNQEMEALKEMLYAATKALKPGGRLVVITYHSLEDRMVKNIMKTGNIEGKAEQDFFGNVQTPFKLVNNKVIVAGNEEVTRNPRSRSAKLRIAEKR.

Residues 37-39 (GGH), aspartate 57, phenylalanine 79, aspartate 100, and histidine 107 contribute to the S-adenosyl-L-methionine site.

This sequence belongs to the methyltransferase superfamily. RsmH family.

The protein resides in the cytoplasm. The enzyme catalyses cytidine(1402) in 16S rRNA + S-adenosyl-L-methionine = N(4)-methylcytidine(1402) in 16S rRNA + S-adenosyl-L-homocysteine + H(+). Its function is as follows. Specifically methylates the N4 position of cytidine in position 1402 (C1402) of 16S rRNA. The protein is Ribosomal RNA small subunit methyltransferase H of Phocaeicola vulgatus (strain ATCC 8482 / DSM 1447 / JCM 5826 / CCUG 4940 / NBRC 14291 / NCTC 11154) (Bacteroides vulgatus).